Reading from the N-terminus, the 271-residue chain is ATP synthase subunit a (271 aa).

The next 5 helical transmembrane spans lie at 38 to 58, 100 to 120, 146 to 166, 211 to 231, and 242 to 262; these read FWTL…LFLA, VIAP…LMDL, DVNI…FYSI, LFGN…LLPW, and AIFH…LTIV.

The protein belongs to the ATPase A chain family. As to quaternary structure, F-type ATPases have 2 components, CF(1) - the catalytic core - and CF(0) - the membrane proton channel. CF(1) has five subunits: alpha(3), beta(3), gamma(1), delta(1), epsilon(1). CF(0) has three main subunits: a(1), b(2) and c(9-12). The alpha and beta chains form an alternating ring which encloses part of the gamma chain. CF(1) is attached to CF(0) by a central stalk formed by the gamma and epsilon chains, while a peripheral stalk is formed by the delta and b chains.

It is found in the cell inner membrane. Its function is as follows. Key component of the proton channel; it plays a direct role in the translocation of protons across the membrane. In Klebsiella pneumoniae (strain 342), this protein is ATP synthase subunit a.